Reading from the N-terminus, the 188-residue chain is Probable DNA-directed RNA polymerase subunit delta (188 aa).

In terms of domain architecture, HTH HARE-type spans L14–W81. Residues E96–D188 are disordered. Composition is skewed to acidic residues over residues I118–D150 and E158–D188.

This sequence belongs to the RpoE family. As to quaternary structure, RNAP is composed of a core of 2 alpha, a beta and a beta' subunits. The core is associated with a delta subunit and one of several sigma factors.

Its function is as follows. Participates in both the initiation and recycling phases of transcription. In the presence of the delta subunit, RNAP displays an increased specificity of transcription, a decreased affinity for nucleic acids, and an increased efficiency of RNA synthesis because of enhanced recycling. The polypeptide is Probable DNA-directed RNA polymerase subunit delta (Lactococcus lactis subsp. cremoris (strain MG1363)).